The sequence spans 968 residues: Angiomotin-like protein 1 (968 aa).

2 stretches are compositionally biased toward polar residues: residues 152–164 and 177–187; these read VYQSARQEPQGQE and RSTQPQQNNEE. The interval 152–258 is disordered; that stretch reads VYQSARQEPQ…NRANSGQAHK (107 aa). A compositionally biased stretch (low complexity) spans 203-224; the sequence is GQQQQQQQQQQQQQQQQQQGQG. 3 positions are modified to phosphoserine: Ser-253, Ser-281, and Ser-307. Residues 271 to 291 are a coiled coil; the sequence is RSLSERIMQLSLERNGAKQHL. Residues 285-343 form a disordered region; sequence NGAKQHLPSSGNGKSFKAGGEPSPAQPVCKALDPRGPPPEYPFKTKPMKSPVSKNQDHG. Coiled-coil stretches lie at residues 449-645 and 676-705; these read VERA…RRLR and ALMELVREKEERILALEADMTKWEQKYLEE. The segment at 721-742 is disordered; sequence AERDTTISNHSRNGSYGESSLE. Positions 726–738 are enriched in polar residues; sequence TISNHSRNGSYGE. Residue Ser-731 is modified to Phosphoserine. The stretch at 748 to 773 forms a coiled coil; it reads EEEEVVQANRRCQDMEYTIKNLHAKI. A disordered region spans residues 785–834; that stretch reads QRSRKDAGKTDSASLRPARSVPSIAAATGTHSRQTSLTSSQLTEEKKEEK. Phosphoserine occurs at positions 804, 816, and 840. The span at 853–878 shows a compositional bias: low complexity; the sequence is ASAPLLPTTPASALSLPASTTSASST. A disordered region spans residues 853-956; the sequence is ASAPLLPTTP…GRVSNLLHKP (104 aa). Phosphoserine occurs at positions 912 and 918. The PDZ-binding signature appears at 965 to 968; that stretch reads EVLI.

The protein belongs to the angiomotin family. Post-translationally, polyubiquitinated by NEDD4, leading to proteasomal degradation. Expressed in exocrine glands, including pancreas, submandibular gland, lacrimal gland, parotid gland and sublingual gland (at protein level).

Its subcellular location is the cell junction. It is found in the tight junction. Inhibits the Wnt/beta-catenin signaling pathway, probably by recruiting CTNNB1 to recycling endosomes and hence preventing its translocation to the nucleus. This is Angiomotin-like protein 1 (Amotl1) from Mus musculus (Mouse).